The following is an 82-amino-acid chain: Small ribosomal subunit protein uS17 (82 aa).

It belongs to the universal ribosomal protein uS17 family. In terms of assembly, part of the 30S ribosomal subunit.

In terms of biological role, one of the primary rRNA binding proteins, it binds specifically to the 5'-end of 16S ribosomal RNA. The chain is Small ribosomal subunit protein uS17 from Rickettsia rickettsii (strain Iowa).